An 858-amino-acid polypeptide reads, in one-letter code: Leucine--tRNA ligase (858 aa).

The short motif at 42-52 (PYPSGRLHMGH) is the 'HIGH' region element. A 'KMSKS' region motif is present at residues 618–622 (KMSKS). Lys-621 contributes to the ATP binding site.

This sequence belongs to the class-I aminoacyl-tRNA synthetase family.

The protein resides in the cytoplasm. The catalysed reaction is tRNA(Leu) + L-leucine + ATP = L-leucyl-tRNA(Leu) + AMP + diphosphate. This is Leucine--tRNA ligase from Photobacterium profundum (strain SS9).